The following is a 1188-amino-acid chain: Probable RNA helicase armi (1188 aa).

723-730 provides a ligand contact to ATP; it reads GPPGSGKT. Residues 862–865 carry the DEAG box motif; the sequence is DEAG.

The protein belongs to the DNA2/NAM7 helicase family. SDE3 subfamily. As to quaternary structure, forms a complex with piwi and fs(1)Yb; this interaction is required for proper piRNA loading and nuclear localization of piwi. The interaction of piwi and fs(1)Yb is likely to occur via armi. As to expression, abundant in oocytes and syncytial blastoderm. Expressed at low level throughout development, including somatic tissues. First apparent early in oogenesis, in the cytoplasm of stem cells and mitotically dividing cystoblasts. In regions 2a and 2b of the germarium, it is most concentrated in the center of the germline cysts, where the pro-oocyte is located. In stage 1 and early stage 2 egg chambers, it accumulates at the anterior of the oocyte, near the ring canals. It also extends through the ring canals forming a branched structure that links the early oocyte with adjacent nurse cells. In stage 3 cysts, it accumulates at the posterior cortex and localizes to extensions that pass through the oocyte into the nurse cells. Through stages 4 to 7, it continues to be somewhat enriched at the posterior cortex of the oocyte, but at significantly lower level. In stage 9 to 10 egg chambers, it is found throughout the cytoplasm of the oocyte and nurse cells, with slight enrichment at the oocyte cortex.

The protein resides in the cytoplasm. The enzyme catalyses ATP + H2O = ADP + phosphate + H(+). Its function is as follows. Probable RNA helicase required for axial polarization of the oocyte during early and mid oogenesis. Plays a central role in RNA interference (RNAi) process, a process that mediates mRNA destruction of translational repression. Required for the assembly of the RISC complex, a complex required for target RNA destruction or repression. May be required in the RISC assembly to unwind miRNAs, in the production of single-stranded miRNA from the double-stranded miRNA, a key step in RISC formation. Required both for the translational control of oskar (osk) mRNA and cytoskeletal polarization in the oocyte. Required for somatic primary piRNA biogenesis. Involved in repression of long interspersed nuclear elements (LINEs) including HeT-A, I-element and TART LINEs. This is Probable RNA helicase armi from Drosophila melanogaster (Fruit fly).